Reading from the N-terminus, the 399-residue chain is MFKKFEYKILYKRIFFTCLILVIYIIGSNISIVSNENLRTHKDSFFKLAITNVGGDLHTLNIFSLGLGPWLSSMIILTLINHKSNDKVKTQTRRERHFKERALTLIISAAQGFYIIHSYINKHAIKDSNMLILLLVLITGTLLMVWLADQNTTYGISGPMPIVLMSLVKSIFNTHFPKLNSSASLITMIIVLLVLALFILFFIELTEYRIEYNDIMNISAKDIPSYLSWKLNPAGSISIMVSLSLFMLTNNIVNFIGRFIVNHNFETHVFNFTNPVGITIYLLLQMILGYFLSRLLINTKRKSKEFLKNGNYFEGIQPGQQTEKFLGSKARRICWFGSIVVAIVLAIPMYSALLVPHLLKEVYFTTQMIVFVYIGINIAETIRAYLYFDSYKQILNKYW.

Helical transmembrane passes span 14–34 (IFFTCLILVIYIIGSNISIVS), 60–80 (LNIFSLGLGPWLSSMIILTLI), 102–122 (ALTLIISAAQGFYIIHSYINK), 128–148 (SNMLILLLVLITGTLLMVWLA), 152–172 (TTYGISGPMPIVLMSLVKSIF), 183–203 (ASLITMIIVLLVLALFILFFI), 237–257 (ISIMVSLSLFMLTNNIVNFIG), 272–292 (FTNPVGITIYLLLQMILGYFL), 335–355 (WFGSIVVAIVLAIPMYSALLV), and 362–382 (VYFTTQMIVFVYIGINIAETI).

This sequence belongs to the SecY/SEC61-alpha family. SecY2 subfamily. Component of the accessory SecA2/SecY2 protein translocase complex required to export cell wall proteins. May form heterotrimers with SecE and SecG subunits.

It localises to the cell membrane. In terms of biological role, part of the accessory SecA2/SecY2 system specifically required for export of possible cell wall proteins. The central subunit of a protein translocation channel. This Staphylococcus epidermidis (strain ATCC 12228 / FDA PCI 1200) protein is Accessory Sec system protein translocase subunit SecY2.